Here is a 480-residue protein sequence, read N- to C-terminus: Uridine 5'-monophosphate synthase (480 aa).

A2 bears the N-acetylalanine mark. An OPRTase region spans residues 2 to 214 (AAADALLGSL…AFVAANPNDS (213 aa)). Position 37 is a phosphotyrosine (Y37). The residue at position 214 (S214) is a Phosphoserine. Positions 215–220 (LPSVKK) are domain linker. Residues 221-480 (EPKELSFGAR…WEAYLSRLAV (260 aa)) are OMPdecase. Residue S257 coordinates orotidine 5'-phosphate. UMP-binding positions include S257, D259, and 281–283 (KIH). Orotidine 5'-phosphate-binding positions include K281, K314, D317, T321, S372, 430 to 432 (QQY), and 450 to 451 (GR). Residues K314 and D317 each act as for OMPdecase activity in the active site. Residues D317, T321, S372, 430 to 432 (QQY), and 450 to 451 (GR) each bind UMP.

In the N-terminal section; belongs to the purine/pyrimidine phosphoribosyltransferase family. It in the C-terminal section; belongs to the OMP decarboxylase family. In terms of assembly, homodimer; dimerization is required for enzymatic activity.

The catalysed reaction is orotidine 5'-phosphate + diphosphate = orotate + 5-phospho-alpha-D-ribose 1-diphosphate. It catalyses the reaction orotidine 5'-phosphate + H(+) = UMP + CO2. It functions in the pathway pyrimidine metabolism; UMP biosynthesis via de novo pathway; UMP from orotate: step 1/2. It participates in pyrimidine metabolism; UMP biosynthesis via de novo pathway; UMP from orotate: step 2/2. Its function is as follows. Bifunctional enzyme catalyzing the last two steps of de novo pyrimidine biosynthesis, orotate phosphoribosyltransferase (OPRT), which converts orotate to orotidine-5'-monophosphate (OMP), and orotidine-5'-monophosphate decarboxylase (ODC), the terminal enzymatic reaction that decarboxylates OMP to uridine monophosphate (UMP). This chain is Uridine 5'-monophosphate synthase (UMPS), found in Bos taurus (Bovine).